The following is a 157-amino-acid chain: Protein Smg (157 aa).

Belongs to the Smg family.

The protein is Protein Smg of Yersinia pestis (strain Pestoides F).